The primary structure comprises 271 residues: Very long chain fatty acid elongase 3 (271 aa).

Residue Asn-6 is glycosylated (N-linked (GlcNAc...) asparagine). A run of 7 helical transmembrane segments spans residues 30–50, 67–87, 116–136, 141–161, 165–187, 199–219, and 236–256; these read FLEE…LLIV, PLIL…LRMW, FWSF…AFII, PLIF…SFGY, VPSG…TYYT, LPMV…IFGI, and HFFW…HFFH.

The protein belongs to the ELO family. ELOVL3 subfamily. Interacts with TECR. N-Glycosylated. Expressed in brown adipose tissue and liver. In the skin, strong expressed in the cells of the inner layer of the outer root sheath of the hair follicles and in the sebocytes of the sebaceous glands. Hardly detectable in the epidermis and not at all in fibroblasts.

The protein localises to the endoplasmic reticulum membrane. It catalyses the reaction a very-long-chain acyl-CoA + malonyl-CoA + H(+) = a very-long-chain 3-oxoacyl-CoA + CO2 + CoA. The enzyme catalyses eicosanoyl-CoA + malonyl-CoA + H(+) = 3-oxodocosanoyl-CoA + CO2 + CoA. It carries out the reaction hexadecanoyl-CoA + malonyl-CoA + H(+) = 3-oxooctadecanoyl-CoA + CO2 + CoA. The catalysed reaction is octadecanoyl-CoA + malonyl-CoA + H(+) = 3-oxoeicosanoyl-CoA + CO2 + CoA. It catalyses the reaction (9Z)-octadecenoyl-CoA + malonyl-CoA + H(+) = 3-oxo-(11Z)-eicosenoyl-CoA + CO2 + CoA. The enzyme catalyses (9Z,12Z)-octadecadienoyl-CoA + malonyl-CoA + H(+) = (11Z,14Z)-3-oxoicosa-11,14-dienoyl-CoA + CO2 + CoA. It carries out the reaction (9Z,12Z,15Z)-octadecatrienoyl-CoA + malonyl-CoA + H(+) = (11Z,14Z,17Z)-3-oxoeicosatrienoyl-CoA + CO2 + CoA. The catalysed reaction is docosanoyl-CoA + malonyl-CoA + H(+) = 3-oxotetracosanoyl-CoA + CO2 + CoA. It catalyses the reaction tetradecanoyl-CoA + malonyl-CoA + H(+) = 3-oxohexadecanoyl-CoA + CO2 + CoA. The protein operates within lipid metabolism; polyunsaturated fatty acid biosynthesis. Its function is as follows. Catalyzes the first and rate-limiting reaction of the four reactions that constitute the long-chain fatty acids elongation cycle. This endoplasmic reticulum-bound enzymatic process allows the addition of 2 carbons to the chain of long- and very long-chain fatty acids (VLCFAs) per cycle. Condensing enzyme that exhibits activity toward saturated and unsaturated acyl-CoA substrates with higher activity toward C18 acyl-CoAs, especially C18:0 acyl-CoAs. May participate in the production of saturated and monounsaturated VLCFAs of different chain lengths that are involved in multiple biological processes as precursors of membrane lipids and lipid mediators. Participates in the formation of certain VLCFA and triglycerides in certain cells of the hair follicles and the sebaceous glands, required for skin barrier function. Critical enzyme for lipid accumulation and metabolic activity in brown adipocytes during the early phase of the tissue recruitment. Plays a role in lipid storage and in resistance to diet-induced obesity. The chain is Very long chain fatty acid elongase 3 from Mus musculus (Mouse).